A 219-amino-acid polypeptide reads, in one-letter code: Urease subunit gamma/beta (219 aa).

The interval 1–101 (MFLTPREQEK…LVTVRNPIKS (101 aa)) is urease gamma. The interval 102-219 (SKKTLNTYII…IKRAKERGFA (118 aa)) is urease beta.

In the N-terminal section; belongs to the urease gamma subunit family. It in the C-terminal section; belongs to the urease beta subunit family. In terms of assembly, heterohexamer of 3 UreC (alpha) and 3 UreAB (gamma/beta) subunits.

It is found in the cytoplasm. The catalysed reaction is urea + 2 H2O + H(+) = hydrogencarbonate + 2 NH4(+). It participates in nitrogen metabolism; urea degradation; CO(2) and NH(3) from urea (urease route): step 1/1. This chain is Urease subunit gamma/beta, found in Sulfurisphaera tokodaii (strain DSM 16993 / JCM 10545 / NBRC 100140 / 7) (Sulfolobus tokodaii).